The primary structure comprises 450 residues: ATP-dependent protease ATPase subunit HslU (450 aa).

Residues Val-27, 69–74, Asp-263, Glu-328, and Arg-400 contribute to the ATP site; that span reads GVGKTE.

The protein belongs to the ClpX chaperone family. HslU subfamily. In terms of assembly, a double ring-shaped homohexamer of HslV is capped on each side by a ring-shaped HslU homohexamer. The assembly of the HslU/HslV complex is dependent on binding of ATP.

Its subcellular location is the cytoplasm. ATPase subunit of a proteasome-like degradation complex; this subunit has chaperone activity. The binding of ATP and its subsequent hydrolysis by HslU are essential for unfolding of protein substrates subsequently hydrolyzed by HslV. HslU recognizes the N-terminal part of its protein substrates and unfolds these before they are guided to HslV for hydrolysis. The protein is ATP-dependent protease ATPase subunit HslU of Aquifex aeolicus (strain VF5).